A 709-amino-acid chain; its full sequence is Leucine-rich repeat and calponin homology domain-containing protein 1 (709 aa).

Residues 24-37 (LHQHHQHHQHHQHH) show a composition bias toward basic residues. The segment at 24–49 (LHQHHQHHQHHQHHGGTGGTGFNLPL) is disordered. LRR repeat units lie at residues 60 to 83 (AANS…TAPG), 86 to 108 (LSDT…ELCQ), 109 to 131 (FVSL…AIVN), 132 to 155 (LQML…LCGL), 157 to 176 (LKVL…EIGQ), 177 to 199 (LKQL…QIGQ), 200 to 223 (LKSL…LVDL), 225 to 244 (LVKF…CFRE), and 245 to 268 (MKQL…ICTK). Basic and acidic residues-rich tracts occupy residues 301–312 (HQHVEDSKKDSD) and 381–390 (QEREQLAGRA). The tract at residues 301-390 (HQHVEDSKKD…QEREQLAGRA (90 aa)) is disordered. Ser395, Ser518, and Ser522 each carry phosphoserine. The tract at residues 504 to 526 (SNGSQYSPNEIRENSPSVSPTAN) is disordered. Thr581 is subject to Phosphothreonine. The Calponin-homology (CH) domain maps to 589–702 (MREEKELVEQ…TTVQALLDVT (114 aa)).

In terms of assembly, interacts (via LRR repeats) with unphosphorylated DOCK8 (via DHR-2 domain); the interaction prevents the association between DOCK8 and CDC42.

The protein localises to the cytoplasm. Acts as a negative regulator of GTPase CDC42 by sequestering CDC42-guanine exchange factor DOCK8. Probably by preventing CDC42 activation, negatively regulates CD4(+) T-cell migration in response to chemokine stimulation. This is Leucine-rich repeat and calponin homology domain-containing protein 1 (Lrch1) from Mus musculus (Mouse).